The sequence spans 290 residues: 4-hydroxy-tetrahydrodipicolinate synthase (290 aa).

Pyruvate is bound at residue T46. The active-site Proton donor/acceptor is Y134. Residue K163 is the Schiff-base intermediate with substrate of the active site. V205 serves as a coordination point for pyruvate.

Belongs to the DapA family. Homotetramer; dimer of dimers.

It localises to the cytoplasm. The catalysed reaction is L-aspartate 4-semialdehyde + pyruvate = (2S,4S)-4-hydroxy-2,3,4,5-tetrahydrodipicolinate + H2O + H(+). Its pathway is amino-acid biosynthesis; L-lysine biosynthesis via DAP pathway; (S)-tetrahydrodipicolinate from L-aspartate: step 3/4. In terms of biological role, catalyzes the condensation of (S)-aspartate-beta-semialdehyde [(S)-ASA] and pyruvate to 4-hydroxy-tetrahydrodipicolinate (HTPA). The protein is 4-hydroxy-tetrahydrodipicolinate synthase of Bacillus subtilis (strain 168).